The chain runs to 642 residues: Putative ankyrin repeat protein L91 (642 aa).

14 ANK repeats span residues H42 to P76, E85 to I118, N153 to S186, N190 to K224, N227 to A256, E260 to H288, N292 to E322, N326 to I360, S365 to A397, E401 to H434, D438 to I470, K475 to A514, Y518 to H550, and N554 to I587.

This is Putative ankyrin repeat protein L91 from Acanthamoeba polyphaga (Amoeba).